We begin with the raw amino-acid sequence, 395 residues long: Vomeronasal type-1 receptor 2 (395 aa).

A helical transmembrane segment spans residues 12 to 32 (LYPINISAAWHLGPLPVSCFV). The Extracellular portion of the chain corresponds to 33-51 (SNKYQCSLAFGATTGLRVL). Residues 52-72 (VVVVPQTQLSFLSSLCLVSLF) form a helical membrane-spanning segment. Residues 73–93 (LHSLVSAHGEKPTKPVGLDPT) are Cytoplasmic-facing. The helical transmembrane segment at 94-114 (LFQVVVGILGNFSLLYYYMFL) threads the bilayer. Residues 115 to 170 (YFRGYKPRSTDLILRHLTVADSLVILSKRIPETMATFGLKHFDNYFGCKFLLYAHR) are Extracellular-facing. Residues 171–191 (VGRGVSIGSTCLLSVFQVITI) traverse the membrane as a helical segment. The Cytoplasmic portion of the chain corresponds to 192 to 208 (NPRNSRWAEMKVKAPTY). The chain crosses the membrane as a helical span at residues 209 to 229 (IGLSNILCWAFHMLVNAIFPI). Residues 230-267 (YTTGKWSNNNITKKGDLGYCSAPLSDEVTKSVYAALTS) lie on the Extracellular side of the membrane. An N-linked (GlcNAc...) asparagine glycan is attached at Asn239. Residues 268–288 (FHDVLCLGLMLWASSSIVLVL) form a helical membrane-spanning segment. Residues 289–316 (YRHKQQVQHICRNNLYPNSSPGNRAIQS) lie on the Cytoplasmic side of the membrane. The helical transmembrane segment at 317 to 337 (ILALVSTFALCYALSFITYVY) threads the bilayer. At 338–346 (LALFDNSSW) the chain is on the extracellular side. Asn343 carries N-linked (GlcNAc...) asparagine glycosylation. A helical membrane pass occupies residues 347–367 (WLVNTAALIIACFPTISPFVL). The Cytoplasmic segment spans residues 368–395 (MCRDPSRSRLCSICCRRNRRFFHDFRKM).

This sequence belongs to the G-protein coupled receptor 1 family.

Its subcellular location is the cell membrane. Functionally, putative pheromone receptor. This chain is Vomeronasal type-1 receptor 2 (VN1R2), found in Homo sapiens (Human).